The chain runs to 361 residues: D-alanine--D-alanine ligase (361 aa).

The 206-residue stretch at 140–345 (KHLFAQAGLD…YAELIEKLVA (206 aa)) folds into the ATP-grasp domain. Residue 173–228 (EGELGYPCFVKPANLGSSVGISKCRSREELDQAFELAFQYDRKIVVEEGVIGREIE) coordinates ATP. Mg(2+) contacts are provided by D299, E312, and N314.

This sequence belongs to the D-alanine--D-alanine ligase family. Requires Mg(2+) as cofactor. Mn(2+) serves as cofactor.

The protein localises to the cytoplasm. The enzyme catalyses 2 D-alanine + ATP = D-alanyl-D-alanine + ADP + phosphate + H(+). It functions in the pathway cell wall biogenesis; peptidoglycan biosynthesis. Its function is as follows. Cell wall formation. This is D-alanine--D-alanine ligase from Bacillus licheniformis (strain ATCC 14580 / DSM 13 / JCM 2505 / CCUG 7422 / NBRC 12200 / NCIMB 9375 / NCTC 10341 / NRRL NRS-1264 / Gibson 46).